Here is a 79-residue protein sequence, read N- to C-terminus: Antimicrobial peptide ToAP2 (79 aa).

Positions M1–A23 are cleaved as a signal peptide. The propeptide occupies S50–Y79.

Belongs to the non-disulfide-bridged peptide (NDBP) superfamily. Medium-length antimicrobial peptide (group 3) family. Expressed by the venom gland.

It localises to the secreted. The protein localises to the target cell membrane. Functionally, antimicrobial peptide. Shows antibacterial activity against all M.massiliense bacterial strains tested. Has antifungal activity against Candida spp. and two Cryptococcus neoformans strains with MICs values ranging from 6.25 to 200 uM. Also shows an inhibitory activity on C.albicans biofilms at high concentrations. Exhibits chemotactic activity for monocytes, neutrophils, and eosinophils. Shows low cytotoxic activity and has weak hemolytic activity on human erythrocytes. In vivo, treatment of infected mice with M.massiliense reduces the bacterial load in the liver, lung, and spleen. May act by disrupting the integrity of the bacterial cell membrane. The sequence is that of Antimicrobial peptide ToAP2 from Tityus obscurus (Amazonian scorpion).